The following is a 394-amino-acid chain: MVKCSSIIHENKKPAQLLPESKFAAITKLSLAILSLFLGIAACILIALSGLLPNTLLIIALSLISIIVLSTGISLLIGTQCSKSVQKDEQKPKSIFPKETPSLDPWLLNPLKNKIQSSETLLLDPTSINLKNELFFPSFEEWKKIFLKDPDFLIKSALANWKILEQDEQYILSHIHMDPRIFVTSEPLQKTYQKLQEKHVNNLGIASQVSLTDLQNKTQYENNLIETTTNEITYYFPVVHNPDILRSEWDPISNQLYLIFKKFFIHYHNLFSTALERNQILLIDSLNTGSSNPIARQMELLAFLCVFEQLDYNEDEYTIEPRDYFNRFVYKNSQTAPQIQSFGLLHGYEEMSYASNNIRNVLTHSIVLCSPILYQLITEFDTTKIHADDFDCLI.

Helical transmembrane passes span 31–51 (LAIL…LSGL) and 57–77 (LIIA…SLLI).

Belongs to the chlamydial CPn_0129/CT_036/TC_0306 family.

It localises to the cell membrane. This is an uncharacterized protein from Chlamydia pneumoniae (Chlamydophila pneumoniae).